A 111-amino-acid chain; its full sequence is Cornifelin (111 aa).

Belongs to the cornifelin family. In terms of assembly, directly or indirectly cross-linked to CE proteins loricin and involucrin (IVL).

It is found in the cytoplasm. Its function is as follows. Part of the insoluble cornified cell envelope (CE) of stratified squamous epithelia. The polypeptide is Cornifelin (Cnfn) (Mus musculus (Mouse)).